A 111-amino-acid polypeptide reads, in one-letter code: MICOS complex subunit MIC13 (111 aa).

A helical transmembrane segment spans residues 8 to 26 (VVKFATKVTIAGGALYVAY).

Belongs to the MICOS complex subunit Mic13 family. Component of the mitochondrial contact site and cristae organizing system (MICOS) complex.

It is found in the mitochondrion inner membrane. In terms of biological role, component of the MICOS complex, a large protein complex of the mitochondrial inner membrane that plays crucial roles in the maintenance of crista junctions, inner membrane architecture, and formation of contact sites to the outer membrane. Constituent of mature MICOS complex, it is required for the formation of cristae junction (CJ) and maintenance of cristae morphology. Required for the incorporation of MIC10 into the MICOS complex. The chain is MICOS complex subunit MIC13 from Danio rerio (Zebrafish).